The sequence spans 494 residues: 1-aminocyclopropane-1-carboxylate synthase 2 (494 aa).

N6-(pyridoxal phosphate)lysine is present on K279. Positions 474–494 (NVLNSPHTMSPHSPLVRARTY) are disordered. Residues 475 to 484 (VLNSPHTMSP) show a composition bias toward polar residues.

This sequence belongs to the class-I pyridoxal-phosphate-dependent aminotransferase family. In terms of assembly, homodimer. It depends on pyridoxal 5'-phosphate as a cofactor.

The enzyme catalyses S-adenosyl-L-methionine = 1-aminocyclopropane-1-carboxylate + S-methyl-5'-thioadenosine + H(+). Its pathway is alkene biosynthesis; ethylene biosynthesis via S-adenosyl-L-methionine; ethylene from S-adenosyl-L-methionine: step 1/2. In terms of biological role, catalyzes the formation of 1-aminocyclopropane-1-carboxylate, a direct precursor of ethylene in higher plants. In Cucurbita pepo (Vegetable marrow), this protein is 1-aminocyclopropane-1-carboxylate synthase 2 (ACS2).